A 180-amino-acid chain; its full sequence is uncharacterized protein (180 aa).

The protein belongs to the CdaR family.

This is an uncharacterized protein from Thermomonospora curvata.